A 743-amino-acid chain; its full sequence is Phosphoribosylformylglycinamidine synthase subunit PurL (743 aa).

Residue His-54 is part of the active site. ATP is bound by residues Tyr-57 and Lys-96. Mg(2+) is bound at residue Glu-98. Substrate-binding positions include 99–102 and Arg-121; that span reads SHNH. His-100 acts as the Proton acceptor in catalysis. Asp-122 is a Mg(2+) binding site. Gln-245 lines the substrate pocket. Position 273 (Asp-273) interacts with Mg(2+). A substrate-binding site is contributed by 317 to 319; that stretch reads ESQ. Residues Asp-500 and Gly-537 each coordinate ATP. Asn-538 lines the Mg(2+) pocket. Ser-540 is a binding site for substrate.

This sequence belongs to the FGAMS family. In terms of assembly, monomer. Part of the FGAM synthase complex composed of 1 PurL, 1 PurQ and 2 PurS subunits.

It localises to the cytoplasm. The enzyme catalyses N(2)-formyl-N(1)-(5-phospho-beta-D-ribosyl)glycinamide + L-glutamine + ATP + H2O = 2-formamido-N(1)-(5-O-phospho-beta-D-ribosyl)acetamidine + L-glutamate + ADP + phosphate + H(+). It participates in purine metabolism; IMP biosynthesis via de novo pathway; 5-amino-1-(5-phospho-D-ribosyl)imidazole from N(2)-formyl-N(1)-(5-phospho-D-ribosyl)glycinamide: step 1/2. Functionally, part of the phosphoribosylformylglycinamidine synthase complex involved in the purines biosynthetic pathway. Catalyzes the ATP-dependent conversion of formylglycinamide ribonucleotide (FGAR) and glutamine to yield formylglycinamidine ribonucleotide (FGAM) and glutamate. The FGAM synthase complex is composed of three subunits. PurQ produces an ammonia molecule by converting glutamine to glutamate. PurL transfers the ammonia molecule to FGAR to form FGAM in an ATP-dependent manner. PurS interacts with PurQ and PurL and is thought to assist in the transfer of the ammonia molecule from PurQ to PurL. This is Phosphoribosylformylglycinamidine synthase subunit PurL from Bacillus pumilus (strain SAFR-032).